We begin with the raw amino-acid sequence, 875 residues long: Alanine--tRNA ligase (875 aa).

Zn(2+) is bound by residues histidine 563, histidine 567, cysteine 665, and histidine 669.

This sequence belongs to the class-II aminoacyl-tRNA synthetase family. The cofactor is Zn(2+).

It is found in the cytoplasm. It carries out the reaction tRNA(Ala) + L-alanine + ATP = L-alanyl-tRNA(Ala) + AMP + diphosphate. In terms of biological role, catalyzes the attachment of alanine to tRNA(Ala) in a two-step reaction: alanine is first activated by ATP to form Ala-AMP and then transferred to the acceptor end of tRNA(Ala). Also edits incorrectly charged Ser-tRNA(Ala) and Gly-tRNA(Ala) via its editing domain. The sequence is that of Alanine--tRNA ligase from Shewanella pealeana (strain ATCC 700345 / ANG-SQ1).